A 44-amino-acid chain; its full sequence is Phycoerythrin alpha-1 chain (44 aa).

Residues 1-44 form a disordered region; the sequence is AMDKSAKAPQITIFDHRGCSRAPKSETGGTATKDDQMMVKVSQV. Lys-4 carries the 5-hydroxylysine modification. 15,16-dihydrobiliverdin is bound by residues Cys-19 and Arg-21. A 15,16-dihydrobiliverdin chromophore region spans residues 24 to 26; it reads KSE. 15,16-dihydrobiliverdin is bound at residue Lys-40.

The protein belongs to the phycoerythrin family. In terms of assembly, heterotetramer of 2 different alpha chains and 2 identical beta chains. The subunit composition could comprise of any combination of 2 out of 4 different alpha units with an invariant beta unit. Contains one covalently linked 15,16-dihydrobiliverdin chromophore.

The protein resides in the plastid. The protein localises to the chloroplast thylakoid membrane. Functionally, light-harvesting photosynthetic tetrapyrrole chromophore-protein from the phycobiliprotein complex. The protein is Phycoerythrin alpha-1 chain (cpeA1) of Rhodomonas sp. (strain CS 24) (Chroomonas sp. (strain CS24)).